The following is a 382-amino-acid chain: C-type lectin domain-containing protein 38 (382 aa).

Residues 1–40 (MAIFYDDPLERLNQPIKTKSYRKKQVVQRVHVFIFDNWKL) are Cytoplasmic-facing. The chain crosses the membrane as a helical span at residues 41–61 (ILLGILNLIFLIIAIVFAILF). The Extracellular segment spans residues 62-382 (FVGSADCAQL…FFLCKRAIDF (321 aa)). Positions 97–116 (NAITTTQGTPSNKTSTTTPS) are disordered. Low complexity predominate over residues 100-116 (TTTQGTPSNKTSTTTPS). N-linked (GlcNAc...) asparagine glycosylation is found at asparagine 108 and asparagine 189. 2 consecutive C-type lectin domains span residues 129–250 (VGTK…FVCE) and 264–377 (YNKN…FLCK). 4 cysteine pairs are disulfide-bonded: cysteine 150-cysteine 249, cysteine 223-cysteine 241, cysteine 285-cysteine 376, and cysteine 348-cysteine 368.

Expressed in ventral cord motor neurons and PLM touch neurons.

Its subcellular location is the membrane. Involved in negative modulation of unc-40-mediated axon outgrowth. Required for proper presynaptic development in axons that have reached their targets. May function in concert with E3 ubiquitin-protein ligase rpm-1 in regulating axon outgrowth. This chain is C-type lectin domain-containing protein 38, found in Caenorhabditis elegans.